Here is a 115-residue protein sequence, read N- to C-terminus: Iron-sulfur cluster insertion protein ErpA (115 aa).

Residues C43, C107, and C109 each coordinate iron-sulfur cluster.

The protein belongs to the HesB/IscA family. In terms of assembly, homodimer. It depends on iron-sulfur cluster as a cofactor.

Its function is as follows. Required for insertion of 4Fe-4S clusters for at least IspG. The sequence is that of Iron-sulfur cluster insertion protein ErpA from Photorhabdus laumondii subsp. laumondii (strain DSM 15139 / CIP 105565 / TT01) (Photorhabdus luminescens subsp. laumondii).